The following is a 317-amino-acid chain: Ribonuclease Z (317 aa).

7 residues coordinate Zn(2+): His62, His64, Asp66, His67, His139, Asp210, and His268. The active-site Proton acceptor is the Asp66.

This sequence belongs to the RNase Z family. Homodimer. Requires Zn(2+) as cofactor.

The catalysed reaction is Endonucleolytic cleavage of RNA, removing extra 3' nucleotides from tRNA precursor, generating 3' termini of tRNAs. A 3'-hydroxy group is left at the tRNA terminus and a 5'-phosphoryl group is left at the trailer molecule.. In terms of biological role, zinc phosphodiesterase, which displays some tRNA 3'-processing endonuclease activity. Probably involved in tRNA maturation, by removing a 3'-trailer from precursor tRNA. This chain is Ribonuclease Z, found in Picosynechococcus sp. (strain ATCC 27264 / PCC 7002 / PR-6) (Agmenellum quadruplicatum).